The sequence spans 250 residues: 2,3-bisphosphoglycerate-dependent phosphoglycerate mutase (250 aa).

Substrate contacts are provided by residues 10 to 17 (RHGESQWN), 23 to 24 (TG), R62, 89 to 92 (ERHY), K100, 116 to 117 (RR), and 185 to 186 (GN). H11 acts as the Tele-phosphohistidine intermediate in catalysis. Catalysis depends on E89, which acts as the Proton donor/acceptor.

This sequence belongs to the phosphoglycerate mutase family. BPG-dependent PGAM subfamily. In terms of assembly, homodimer.

The enzyme catalyses (2R)-2-phosphoglycerate = (2R)-3-phosphoglycerate. It functions in the pathway carbohydrate degradation; glycolysis; pyruvate from D-glyceraldehyde 3-phosphate: step 3/5. Its function is as follows. Catalyzes the interconversion of 2-phosphoglycerate and 3-phosphoglycerate. The sequence is that of 2,3-bisphosphoglycerate-dependent phosphoglycerate mutase from Salmonella paratyphi A (strain ATCC 9150 / SARB42).